Consider the following 563-residue polypeptide: GTPase Obg (563 aa).

An Obg domain is found at 2–168; the sequence is SDFVDRVTVH…RDVILELKSI (167 aa). One can recognise an OBG-type G domain in the interval 169–349; it reads ADVALVGFPS…LNFALSALVH (181 aa). GTP contacts are provided by residues 175-182, 200-204, 221-224, 301-304, and 330-332; these read GFPSAGKS, FTTLV, DVPG, NKID, and STA. 2 residues coordinate Mg(2+): Ser182 and Thr202. An OCT domain is found at 383-469; the sequence is DEGGSALEFT…ARMVEFDWDP (87 aa). The interval 529–563 is disordered; that stretch reads RKAGHWADPTVDDDRHDETSLFGHGESSEDGETEE.

Belongs to the TRAFAC class OBG-HflX-like GTPase superfamily. OBG GTPase family. Monomer. Mg(2+) is required as a cofactor.

It localises to the cytoplasm. An essential GTPase which binds GTP, GDP and possibly (p)ppGpp with moderate affinity, with high nucleotide exchange rates and a fairly low GTP hydrolysis rate. Plays a role in control of the cell cycle, stress response, ribosome biogenesis and in those bacteria that undergo differentiation, in morphogenesis control. The sequence is that of GTPase Obg from Bifidobacterium longum (strain NCC 2705).